The chain runs to 178 residues: Bifunctional protein PyrR (178 aa).

The short motif at 97–109 is the PRPP-binding element; sequence VVLVDDVLYTGRT.

It belongs to the purine/pyrimidine phosphoribosyltransferase family. PyrR subfamily.

It catalyses the reaction UMP + diphosphate = 5-phospho-alpha-D-ribose 1-diphosphate + uracil. In terms of biological role, regulates the transcription of the pyrimidine nucleotide (pyr) operon in response to exogenous pyrimidines. Also displays a weak uracil phosphoribosyltransferase activity which is not physiologically significant. This is Bifunctional protein PyrR from Herpetosiphon aurantiacus (strain ATCC 23779 / DSM 785 / 114-95).